Reading from the N-terminus, the 118-residue chain is Large ribosomal subunit protein uL18 (118 aa).

This sequence belongs to the universal ribosomal protein uL18 family. Part of the 50S ribosomal subunit; part of the 5S rRNA/L5/L18/L25 subcomplex. Contacts the 5S and 23S rRNAs.

In terms of biological role, this is one of the proteins that bind and probably mediate the attachment of the 5S RNA into the large ribosomal subunit, where it forms part of the central protuberance. The protein is Large ribosomal subunit protein uL18 of Campylobacter jejuni subsp. jejuni serotype O:6 (strain 81116 / NCTC 11828).